The primary structure comprises 61 residues: Photosystem II reaction center X protein (61 aa).

The helical transmembrane segment at 26–46 (IGSFIAAALLIVIPATAFLIF) threads the bilayer.

The protein belongs to the PsbX family. Type 2 subfamily. PSII consists of a core antenna complex that captures photons, and an electron transfer chain that converts photonic excitation into a charge separation. PSII forms dimeric complexes.

Its subcellular location is the cellular thylakoid membrane. Involved in the binding and/or turnover of quinones at the Q(B) site of Photosystem II. The chain is Photosystem II reaction center X protein from Prochlorococcus marinus (strain MIT 9215).